The following is a 213-amino-acid chain: MKVLITGFDSFGGESINPALEAVKMIPENIEGAQVIKLEIPTVFRKSLEKIEEKIEEINPDIVISIGQAGGRFGVTPERVAINMDDARIEDNEGNQPIDISIYEDGESAYFSNLPIKAMVKEMVDNGIPASVSNTAGTFVCNHVMYGVLYLVNKKYKNIRAGFIHVPYIPAQVVNKPNTPSMSINDIAKGLELSIKAIVLNDNDIKTVGGAVC.

Residues Glu78, Cys141, and His165 contribute to the active site.

The protein belongs to the peptidase C15 family. In terms of assembly, homotetramer.

It is found in the cytoplasm. The enzyme catalyses Release of an N-terminal pyroglutamyl group from a polypeptide, the second amino acid generally not being Pro.. In terms of biological role, removes 5-oxoproline from various penultimate amino acid residues except L-proline. In Clostridium perfringens (strain SM101 / Type A), this protein is Pyrrolidone-carboxylate peptidase.